A 316-amino-acid polypeptide reads, in one-letter code: Protein PXR1 (316 aa).

The 47-residue stretch at 25 to 71 (TSRFGHQYLERMGWKPGKGLGLVEHATTSHVKVSIKDDNLGLGSKLA) folds into the G-patch domain. Positions 146 to 280 (GTTKKRKIDS…DSMLMPKEQL (135 aa)) are disordered. Positions 179-195 (DRKEKEEKKTEKENSEI) are enriched in basic and acidic residues. A compositionally biased stretch (basic residues) spans 196-209 (KKKKKEKKEKKEKK). Residues 210-240 (EKKDKNEKKEKKDKNEKKEKKDKNEEKEKKE) are compositionally biased toward basic and acidic residues. Basic residues predominate over residues 241-260 (KKEKKEKKDKKDKKDKKDKK). Over residues 261–270 (EKKEVKEVTR) the composition is skewed to basic and acidic residues.

Belongs to the PINX1 family.

It localises to the nucleus. The protein localises to the nucleolus. In terms of biological role, involved in rRNA-processing at A0, A1 and A2 sites and negatively regulates telomerase. This Debaryomyces hansenii (strain ATCC 36239 / CBS 767 / BCRC 21394 / JCM 1990 / NBRC 0083 / IGC 2968) (Yeast) protein is Protein PXR1 (PXR1).